We begin with the raw amino-acid sequence, 200 residues long: ATP-dependent Clp protease proteolytic subunit 3 (200 aa).

The active-site Nucleophile is the serine 101. The active site involves histidine 126.

It belongs to the peptidase S14 family. In terms of assembly, fourteen ClpP subunits assemble into 2 heptameric rings which stack back to back to give a disk-like structure with a central cavity, resembling the structure of eukaryotic proteasomes.

The protein localises to the cytoplasm. The enzyme catalyses Hydrolysis of proteins to small peptides in the presence of ATP and magnesium. alpha-casein is the usual test substrate. In the absence of ATP, only oligopeptides shorter than five residues are hydrolyzed (such as succinyl-Leu-Tyr-|-NHMec, and Leu-Tyr-Leu-|-Tyr-Trp, in which cleavage of the -Tyr-|-Leu- and -Tyr-|-Trp bonds also occurs).. Its function is as follows. Cleaves peptides in various proteins in a process that requires ATP hydrolysis. Has a chymotrypsin-like activity. Plays a major role in the degradation of misfolded proteins. This Parasynechococcus marenigrum (strain WH8102) protein is ATP-dependent Clp protease proteolytic subunit 3.